Here is a 342-residue protein sequence, read N- to C-terminus: S-adenosylmethionine:tRNA ribosyltransferase-isomerase (342 aa).

It belongs to the QueA family. In terms of assembly, monomer.

The protein resides in the cytoplasm. It catalyses the reaction 7-aminomethyl-7-carbaguanosine(34) in tRNA + S-adenosyl-L-methionine = epoxyqueuosine(34) in tRNA + adenine + L-methionine + 2 H(+). The protein operates within tRNA modification; tRNA-queuosine biosynthesis. In terms of biological role, transfers and isomerizes the ribose moiety from AdoMet to the 7-aminomethyl group of 7-deazaguanine (preQ1-tRNA) to give epoxyqueuosine (oQ-tRNA). This Listeria innocua serovar 6a (strain ATCC BAA-680 / CLIP 11262) protein is S-adenosylmethionine:tRNA ribosyltransferase-isomerase.